The primary structure comprises 720 residues: Serine/threonine-protein kinase KIN82 (720 aa).

Composition is skewed to polar residues over residues 1 to 13 (MTQQ…SQRL) and 99 to 116 (FNHN…STSE). Disordered stretches follow at residues 1–20 (MTQQ…RSMS) and 99–128 (FNHN…RSTI). Ser203 carries the phosphoserine modification. The segment covering 230–241 (SPLANLSLSNSP) has biased composition (low complexity). Residues 230-257 (SPLANLSLSNSPIDSPRKNSETRKDQIP) are disordered. Residues 244 to 255 (SPRKNSETRKDQ) are compositionally biased toward basic and acidic residues. The Protein kinase domain occupies 324–602 (FEKIRLLGQG…AADIKRHPFF (279 aa)). Residues 330–338 (LGQGDVGKV) and Lys353 each bind ATP. Asp449 functions as the Proton acceptor in the catalytic mechanism.

The protein belongs to the protein kinase superfamily. Ser/Thr protein kinase family. KIN82 subfamily.

The catalysed reaction is L-seryl-[protein] + ATP = O-phospho-L-seryl-[protein] + ADP + H(+). It carries out the reaction L-threonyl-[protein] + ATP = O-phospho-L-threonyl-[protein] + ADP + H(+). Its function is as follows. Flippase activator that phosphorylates DFN1 and DFN2 and which is involved in the generation of phospholipid asymmetry in membranes by the inward translocation of phospholipids. In Saccharomyces cerevisiae (strain ATCC 204508 / S288c) (Baker's yeast), this protein is Serine/threonine-protein kinase KIN82 (KIN82).